A 285-amino-acid chain; its full sequence is MAQSRLFFSADKAEAERTYNILEQAFEDDGFPIAITEIDEDRQIFEVSVYVEDDAEEVAARVDALVGPGLFDTEELPDIDWVTHSLEGLKPVRAGHFFVHGSHDRDKIEPGDIAIEIDAGLAFGTGHHGTTAGCLELIEETVETEHPTNALDLGTGSAVLAIAIARLAPIPILATDIDPIAVTVAAENAAKNGVAEHIVTATAEGFGHPIFRSYSPFDLIVANILANPLIELAPSIKEHLAPGGSIILSGILDSQHDAVLAAYQTQGLTHQKTLHREGWVAIHLT.

Positions 131, 154, 176, and 223 each coordinate S-adenosyl-L-methionine.

It belongs to the methyltransferase superfamily. PrmA family.

It localises to the cytoplasm. The catalysed reaction is L-lysyl-[protein] + 3 S-adenosyl-L-methionine = N(6),N(6),N(6)-trimethyl-L-lysyl-[protein] + 3 S-adenosyl-L-homocysteine + 3 H(+). Its function is as follows. Methylates ribosomal protein L11. This is Ribosomal protein L11 methyltransferase from Brucella abortus (strain S19).